We begin with the raw amino-acid sequence, 139 residues long: Small ribosomal subunit protein uS9 (139 aa).

This sequence belongs to the universal ribosomal protein uS9 family.

In Coxiella burnetii (strain CbuG_Q212) (Coxiella burnetii (strain Q212)), this protein is Small ribosomal subunit protein uS9.